The sequence spans 166 residues: Large ribosomal subunit protein uL10 (166 aa).

Belongs to the universal ribosomal protein uL10 family. Part of the ribosomal stalk of the 50S ribosomal subunit. The N-terminus interacts with L11 and the large rRNA to form the base of the stalk. The C-terminus forms an elongated spine to which L12 dimers bind in a sequential fashion forming a multimeric L10(L12)X complex.

Its function is as follows. Forms part of the ribosomal stalk, playing a central role in the interaction of the ribosome with GTP-bound translation factors. The chain is Large ribosomal subunit protein uL10 from Streptococcus pyogenes serotype M28 (strain MGAS6180).